A 201-amino-acid polypeptide reads, in one-letter code: dITP/XTP pyrophosphatase (201 aa).

9 to 14 contributes to the substrate binding site; the sequence is SNNAGK. 2 residues coordinate Mg(2+): glutamate 41 and aspartate 70. Aspartate 70 (proton acceptor) is an active-site residue. Substrate-binding positions include serine 71, 155-158, lysine 178, and 183-184; these read FGYD and HR.

Belongs to the HAM1 NTPase family. In terms of assembly, homodimer. It depends on Mg(2+) as a cofactor.

The catalysed reaction is XTP + H2O = XMP + diphosphate + H(+). The enzyme catalyses dITP + H2O = dIMP + diphosphate + H(+). It catalyses the reaction ITP + H2O = IMP + diphosphate + H(+). Its function is as follows. Pyrophosphatase that catalyzes the hydrolysis of nucleoside triphosphates to their monophosphate derivatives, with a high preference for the non-canonical purine nucleotides XTP (xanthosine triphosphate), dITP (deoxyinosine triphosphate) and ITP. Seems to function as a house-cleaning enzyme that removes non-canonical purine nucleotides from the nucleotide pool, thus preventing their incorporation into DNA/RNA and avoiding chromosomal lesions. This Methylococcus capsulatus (strain ATCC 33009 / NCIMB 11132 / Bath) protein is dITP/XTP pyrophosphatase.